The following is a 997-amino-acid chain: Bifunctional purine synthesis protein purC/E (997 aa).

Positions 1 to 305 (MTTAINNNIV…NNNNNNNNNS (305 aa)) are SAICAR synthetase. Composition is skewed to low complexity over residues 294-323 (LNNNNNNNNNNSNNNNNNTSSTSRSNSLPN), 342-355 (QQQSGVGNNNNVNS), and 524-536 (TSTSTTTTTTTTS). Disordered stretches follow at residues 294-355 (LNNN…NVNS), 518-538 (IPVDNPTSTSTTTTTTTTSNA), 550-569 (INSNTSSHNNNQQQQQQQQT), and 575-604 (PTIINTPTPVRSSVSRSQSPLPSGNGSSII). The interval 305–997 (SNNNNNNTSS…GRKMGHVTQQ (693 aa)) is AIR carboxylase. Positions 575 to 597 (PTIINTPTPVRSSVSRSQSPLPS) are enriched in low complexity. Residues arginine 728, lysine 768, glutamine 779, 807 to 810 (EQYI), and glutamate 815 contribute to the ATP site. Residues 732–927 (KTFIQSLDIP…QFEQLIRCVC (196 aa)) enclose the ATP-grasp domain. Mg(2+) is bound by residues glutamate 880 and glutamate 898. 897 to 898 (NE) is a binding site for ATP.

In the N-terminal section; belongs to the SAICAR synthetase family. This sequence in the C-terminal section; belongs to the AIR carboxylase family. Class I subfamily. The cofactor is Mg(2+). It depends on Mn(2+) as a cofactor.

The catalysed reaction is 5-amino-1-(5-phospho-D-ribosyl)imidazole-4-carboxylate + L-aspartate + ATP = (2S)-2-[5-amino-1-(5-phospho-beta-D-ribosyl)imidazole-4-carboxamido]succinate + ADP + phosphate + 2 H(+). It carries out the reaction 5-amino-1-(5-phospho-D-ribosyl)imidazole-4-carboxylate + H(+) = 5-amino-1-(5-phospho-beta-D-ribosyl)imidazole + CO2. It functions in the pathway purine metabolism; IMP biosynthesis via de novo pathway; 5-amino-1-(5-phospho-D-ribosyl)imidazole-4-carboxylate from 5-amino-1-(5-phospho-D-ribosyl)imidazole (carboxylase route): step 1/1. It participates in purine metabolism; IMP biosynthesis via de novo pathway; 5-amino-1-(5-phospho-D-ribosyl)imidazole-4-carboxamide from 5-amino-1-(5-phospho-D-ribosyl)imidazole-4-carboxylate: step 1/2. In terms of biological role, bifunctional enzyme involved in de novo IMP synthesis, an essential step for de nove purine synthesis. The polypeptide is Bifunctional purine synthesis protein purC/E (purC/E) (Dictyostelium discoideum (Social amoeba)).